The following is a 435-amino-acid chain: D-amino acid dehydrogenase (435 aa).

3 to 17 (VIVLGGGVLGVSTAW) contributes to the FAD binding site.

This sequence belongs to the DadA oxidoreductase family. FAD is required as a cofactor.

The enzyme catalyses a D-alpha-amino acid + A + H2O = a 2-oxocarboxylate + AH2 + NH4(+). It participates in amino-acid degradation; D-alanine degradation; NH(3) and pyruvate from D-alanine: step 1/1. Its function is as follows. Oxidative deamination of D-amino acids. This chain is D-amino acid dehydrogenase, found in Chromobacterium violaceum (strain ATCC 12472 / DSM 30191 / JCM 1249 / CCUG 213 / NBRC 12614 / NCIMB 9131 / NCTC 9757 / MK).